The sequence spans 409 residues: Putative lipoate-protein ligase A (409 aa).

Residues 146–330 enclose the BPL/LPL catalytic domain; it reads GPDNCRLLFY…RFQKTFKVDG (185 aa). ATP-binding positions include Arg188, 193-196, and Lys249; that span reads GTVL. Lys249 is a binding site for (R)-lipoate.

The protein belongs to the LplA family. Monomer.

It catalyses the reaction L-lysyl-[lipoyl-carrier protein] + (R)-lipoate + ATP = N(6)-[(R)-lipoyl]-L-lysyl-[lipoyl-carrier protein] + AMP + diphosphate + H(+). Its pathway is protein modification; protein lipoylation via exogenous pathway; protein N(6)-(lipoyl)lysine from lipoate: step 1/2. It functions in the pathway protein modification; protein lipoylation via exogenous pathway; protein N(6)-(lipoyl)lysine from lipoate: step 2/2. In terms of biological role, catalyzes both the ATP-dependent activation of exogenously supplied lipoate to lipoyl-AMP and the transfer of the activated lipoyl onto the lipoyl domains of lipoate-dependent enzymes. This is Putative lipoate-protein ligase A (AIM22) from Saccharomyces cerevisiae (strain ATCC 204508 / S288c) (Baker's yeast).